A 289-amino-acid polypeptide reads, in one-letter code: Pantothenate synthetase (289 aa).

33–40 (MGNLHDGH) serves as a coordination point for ATP. Histidine 40 serves as the catalytic Proton donor. Residue glutamine 64 coordinates (R)-pantoate. Residue glutamine 64 participates in beta-alanine binding. 155–158 (GKKD) is a binding site for ATP. Glutamine 161 serves as a coordination point for (R)-pantoate. Residues alanine 184 and 192-195 (LSSR) contribute to the ATP site.

It belongs to the pantothenate synthetase family. As to quaternary structure, homodimer.

It localises to the cytoplasm. The enzyme catalyses (R)-pantoate + beta-alanine + ATP = (R)-pantothenate + AMP + diphosphate + H(+). It participates in cofactor biosynthesis; (R)-pantothenate biosynthesis; (R)-pantothenate from (R)-pantoate and beta-alanine: step 1/1. Functionally, catalyzes the condensation of pantoate with beta-alanine in an ATP-dependent reaction via a pantoyl-adenylate intermediate. The chain is Pantothenate synthetase from Acidovorax sp. (strain JS42).